The sequence spans 884 residues: Lon protease homolog 2, peroxisomal (884 aa).

In terms of domain architecture, Lon N-terminal spans 12–255; the sequence is LAILPFRNKV…KATELVDRHL (244 aa). A disordered region spans residues 67–101; the sequence is SLLSPGVGSDSGEGGSKAPGGSAGESTKQDTKNGK. Over residues 75–89 the composition is skewed to gly residues; sequence SDSGEGGSKAPGGSA. 408-415 contributes to the ATP binding site; it reads GPPGVGKT. Residues 689–874 form the Lon proteolytic domain; it reads VASPGVSVGL…EEVLDHAFEG (186 aa). Active-site residues include serine 780 and lysine 823. The short motif at 882 to 884 is the Microbody targeting signal element; that stretch reads SKL.

This sequence belongs to the peptidase S16 family.

It is found in the peroxisome matrix. It carries out the reaction Hydrolysis of proteins in presence of ATP.. In terms of biological role, ATP-dependent serine protease that mediates the selective degradation of misfolded and unassembled polypeptides in the peroxisomal matrix. Necessary for type 2 peroxisome targeting signal (PTS2)-containing protein processing and facilitates peroxisome matrix protein import. The chain is Lon protease homolog 2, peroxisomal from Oryza sativa subsp. japonica (Rice).